A 388-amino-acid chain; its full sequence is Large ribosomal subunit protein uL3B (388 aa).

Residues Met-1 to Arg-10 show a composition bias toward basic and acidic residues. Positions Met-1–Lys-34 are disordered. Residues Pro-18–Ala-31 show a composition bias toward basic residues.

It belongs to the universal ribosomal protein uL3 family. In terms of assembly, component of the large ribosomal subunit (LSU). Mature yeast ribosomes consist of a small (40S) and a large (60S) subunit. The 40S small subunit contains 1 molecule of ribosomal RNA (18S rRNA) and at least 33 different proteins. The large 60S subunit contains 3 rRNA molecules (25S, 5.8S and 5S rRNA) and at least 46 different proteins. uL3 forms together with ES39L one of the contact sites for the signal recognition particle that targets ribosomes to the endoplasmic reticulum membrane.

It is found in the cytoplasm. In terms of biological role, component of the ribosome, a large ribonucleoprotein complex responsible for the synthesis of proteins in the cell. The small ribosomal subunit (SSU) binds messenger RNAs (mRNAs) and translates the encoded message by selecting cognate aminoacyl-transfer RNA (tRNA) molecules. The large subunit (LSU) contains the ribosomal catalytic site termed the peptidyl transferase center (PTC), which catalyzes the formation of peptide bonds, thereby polymerizing the amino acids delivered by tRNAs into a polypeptide chain. The nascent polypeptides leave the ribosome through a tunnel in the LSU and interact with protein factors that function in enzymatic processing, targeting, and the membrane insertion of nascent chains at the exit of the ribosomal tunnel. uL3 plays a role in coordinating processes of accommodating the aminoacyl-tRNA in the PTC. The chain is Large ribosomal subunit protein uL3B (rpl302) from Schizosaccharomyces pombe (strain 972 / ATCC 24843) (Fission yeast).